A 199-amino-acid polypeptide reads, in one-letter code: Elongation factor Ts (199 aa).

The segment at 82–85 (TDFV) is involved in Mg(2+) ion dislocation from EF-Tu.

It belongs to the EF-Ts family.

Its subcellular location is the cytoplasm. In terms of biological role, associates with the EF-Tu.GDP complex and induces the exchange of GDP to GTP. It remains bound to the aminoacyl-tRNA.EF-Tu.GTP complex up to the GTP hydrolysis stage on the ribosome. In Leptospira interrogans serogroup Icterohaemorrhagiae serovar copenhageni (strain Fiocruz L1-130), this protein is Elongation factor Ts.